We begin with the raw amino-acid sequence, 256 residues long: Isoprenyl transferase (256 aa).

Asp-33 is an active-site residue. Mg(2+) is bound at residue Asp-33. Residues 34–37, Trp-38, Arg-46, His-50, and 78–80 each bind substrate; these read GNGR and STE. Asn-81 functions as the Proton acceptor in the catalytic mechanism. Residues Trp-82, Arg-84, Arg-201, and 207–209 contribute to the substrate site; that span reads RIS. Glu-220 is a Mg(2+) binding site.

It belongs to the UPP synthase family. As to quaternary structure, homodimer. Mg(2+) is required as a cofactor.

Functionally, catalyzes the condensation of isopentenyl diphosphate (IPP) with allylic pyrophosphates generating different type of terpenoids. This chain is Isoprenyl transferase, found in Staphylococcus haemolyticus (strain JCSC1435).